The following is a 434-amino-acid chain: Sodium/bile acid cotransporter 5 (434 aa).

The first 18 residues, 1 to 18 (MSGNFFIFLLLLVTPGEA), serve as a signal peptide directing secretion. Residues 19-129 (KKSFLSFLNI…VRVFRQTDDS (111 aa)) lie on the Extracellular side of the membrane. Asn-73 and Asn-96 each carry an N-linked (GlcNAc...) asparagine glycan. The helical transmembrane segment at 130 to 150 (LLQAPIHVDSSIFLLVLSMIL) threads the bilayer. Residues 151–172 (LNKCAFGCKIEFQVLQTVWKRP) lie on the Cytoplasmic side of the membrane. Residues 173–193 (LPILLGVVIQFFLMPFCGFLL) traverse the membrane as a helical segment. Residues 194-203 (SQILGLPKAQ) are Extracellular-facing. Residues 204–226 (AFGFVMTCTCPGGGGGYLFALLL) form a helical membrane-spanning segment. The Cytoplasmic segment spans residues 227–232 (EGDVTL). A helical transmembrane segment spans residues 233–255 (AILMTCTSTSLALIMMPVNSYFY). The Extracellular segment spans residues 256-268 (SRLLGLAGAFHVP). Residues 269-289 (VLKIVSTLLFILMPMSTGVII) form a helical membrane-spanning segment. Residues 290-306 (KHKMPAKAICLERVVRP) lie on the Cytoplasmic side of the membrane. The helical transmembrane segment at 307 to 327 (LSLTLMFVGIYLAFRMGLVFL) threads the bilayer. The Extracellular segment spans residues 328–331 (RMAN). A helical membrane pass occupies residues 332-352 (LEVFLLGLLVPALGLLFGYSL). The Cytoplasmic portion of the chain corresponds to 353–365 (AKVYLLPLPVCKT). A helical transmembrane segment spans residues 366 to 386 (VALETGMLNSFLALAIIQLSF). Over 387 to 395 (SQPKAHEAS) the chain is Extracellular. Residues 396 to 416 (VAPFTVAMCSSCEMLLLLLVY) traverse the membrane as a helical segment. Residues 417–434 (KAKRRPSLSTEYEKTPLV) lie on the Cytoplasmic side of the membrane.

This sequence belongs to the bile acid:sodium symporter (BASS) (TC 2.A.28) family.

The protein resides in the membrane. The chain is Sodium/bile acid cotransporter 5 (Slc10a5) from Mus musculus (Mouse).